The following is a 339-amino-acid chain: Ribosomal RNA small subunit methyltransferase H (339 aa).

Residues 40–42 (GGY), Asp-58, Phe-85, Asp-106, and Gln-113 each bind S-adenosyl-L-methionine.

The protein belongs to the methyltransferase superfamily. RsmH family.

It is found in the cytoplasm. It carries out the reaction cytidine(1402) in 16S rRNA + S-adenosyl-L-methionine = N(4)-methylcytidine(1402) in 16S rRNA + S-adenosyl-L-homocysteine + H(+). Functionally, specifically methylates the N4 position of cytidine in position 1402 (C1402) of 16S rRNA. The chain is Ribosomal RNA small subunit methyltransferase H from Parvibaculum lavamentivorans (strain DS-1 / DSM 13023 / NCIMB 13966).